Reading from the N-terminus, the 126-residue chain is Large ribosomal subunit protein bL12 (126 aa).

Belongs to the bacterial ribosomal protein bL12 family. Homodimer. Part of the ribosomal stalk of the 50S ribosomal subunit. Forms a multimeric L10(L12)X complex, where L10 forms an elongated spine to which 2 to 4 L12 dimers bind in a sequential fashion. Binds GTP-bound translation factors.

Forms part of the ribosomal stalk which helps the ribosome interact with GTP-bound translation factors. Is thus essential for accurate translation. The protein is Large ribosomal subunit protein bL12 of Methylocella silvestris (strain DSM 15510 / CIP 108128 / LMG 27833 / NCIMB 13906 / BL2).